The chain runs to 473 residues: UDP-N-acetylmuramate--L-alanine ligase (473 aa).

122–128 (GTHGKTT) provides a ligand contact to ATP.

The protein belongs to the MurCDEF family.

The protein localises to the cytoplasm. The catalysed reaction is UDP-N-acetyl-alpha-D-muramate + L-alanine + ATP = UDP-N-acetyl-alpha-D-muramoyl-L-alanine + ADP + phosphate + H(+). Its pathway is cell wall biogenesis; peptidoglycan biosynthesis. Cell wall formation. The sequence is that of UDP-N-acetylmuramate--L-alanine ligase from Teredinibacter turnerae (strain ATCC 39867 / T7901).